A 469-amino-acid chain; its full sequence is Glutamate--tRNA ligase (469 aa).

Positions 8–18 match the 'HIGH' region motif; that stretch reads PSPTGFLHVGG. 4 residues coordinate Zn(2+): Cys97, Cys99, Cys124, and Asp126. The 'KMSKS' region motif lies at 236–240; that stretch reads KLSKR. Position 239 (Lys239) interacts with ATP.

This sequence belongs to the class-I aminoacyl-tRNA synthetase family. Glutamate--tRNA ligase type 1 subfamily. In terms of assembly, monomer. Requires Zn(2+) as cofactor.

It localises to the cytoplasm. It carries out the reaction tRNA(Glu) + L-glutamate + ATP = L-glutamyl-tRNA(Glu) + AMP + diphosphate. Catalyzes the attachment of glutamate to tRNA(Glu) in a two-step reaction: glutamate is first activated by ATP to form Glu-AMP and then transferred to the acceptor end of tRNA(Glu). The protein is Glutamate--tRNA ligase of Francisella philomiragia subsp. philomiragia (strain ATCC 25017 / CCUG 19701 / FSC 153 / O#319-036).